A 467-amino-acid chain; its full sequence is Methionine aminopeptidase 2-1 (467 aa).

The span at 1–10 shows a compositional bias: basic and acidic residues; sequence MGSKSPDGHR. Residues 1–105 form a disordered region; sequence MGSKSPDGHR…TPPRVSLPSI (105 aa). The span at 43-55 shows a compositional bias: acidic residues; it reads DGDDEDEDGDDDG. Residues 75–90 show a composition bias toward basic residues; that stretch reads KKRKRKSNKKKKKKTS. Residue His219 coordinates substrate. Residues Asp240, Asp251, and His320 each coordinate a divalent metal cation. Position 328 (His328) interacts with substrate. Positions 353 and 448 each coordinate a divalent metal cation.

The protein belongs to the peptidase M24A family. Methionine aminopeptidase eukaryotic type 2 subfamily. Co(2+) serves as cofactor. The cofactor is Zn(2+). Requires Mn(2+) as cofactor. Fe(2+) is required as a cofactor.

It is found in the cytoplasm. It carries out the reaction Release of N-terminal amino acids, preferentially methionine, from peptides and arylamides.. Functionally, cotranslationally removes the N-terminal methionine from nascent proteins. The N-terminal methionine is often cleaved when the second residue in the primary sequence is small and uncharged (Met-Ala-, Cys, Gly, Pro, Ser, Thr, or Val). The polypeptide is Methionine aminopeptidase 2-1 (Arthroderma gypseum (strain ATCC MYA-4604 / CBS 118893) (Microsporum gypseum)).